A 363-amino-acid polypeptide reads, in one-letter code: Spermidine/putrescine import ATP-binding protein PotA (363 aa).

The ABC transporter domain occupies 5 to 236 (IKLKHVRKEY…PVNDFVARFI (232 aa)). 38–45 (GPSGSGKT) is an ATP binding site.

Belongs to the ABC transporter superfamily. Spermidine/putrescine importer (TC 3.A.1.11.1) family. In terms of assembly, the complex is composed of two ATP-binding proteins (PotA), two transmembrane proteins (PotB and PotC) and a solute-binding protein (PotD).

It is found in the cell membrane. The enzyme catalyses ATP + H2O + polyamine-[polyamine-binding protein]Side 1 = ADP + phosphate + polyamineSide 2 + [polyamine-binding protein]Side 1.. Functionally, part of the ABC transporter complex PotABCD involved in spermidine/putrescine import. Responsible for energy coupling to the transport system. The polypeptide is Spermidine/putrescine import ATP-binding protein PotA (Lactobacillus johnsonii (strain CNCM I-12250 / La1 / NCC 533)).